The chain runs to 764 residues: Reticulon-1 (764 aa).

Disordered regions lie at residues 1–37, 115–147, 247–400, and 455–475; these read MAAN…GGAL, PDIK…SGIE, LYNS…SEIE, and ESCD…DSPM. The span at 261-282 shows a compositional bias: polar residues; sequence VTISFTGMETTLQTEYPENQQG. Positions 328 to 337 are enriched in basic and acidic residues; the sequence is EEQRKYKISE. Residues 578-764 enclose the Reticulon domain; that stretch reads AIELLYWRDI…AKIPGTKQKE (187 aa). The next 2 helical transmembrane spans lie at 607-627 and 696-716; these read FSVV…TISF and VLMW…LLIM.

Its subcellular location is the endoplasmic reticulum membrane. The protein localises to the nucleus. Functionally, inhibits amyloid precursor protein processing, probably by blocking BACE1 activity. In Xenopus tropicalis (Western clawed frog), this protein is Reticulon-1.